The sequence spans 208 residues: Holliday junction branch migration complex subunit RuvA (208 aa).

Residues 1-63 form a domain I region; sequence MIGMLTGRVE…QDSVTLYGFL (63 aa). Positions 64 to 142 are domain II; the sequence is DRDSKRVFLQ…LNQSDDASAG (79 aa). Residues 143 to 151 are flexible linker; that stretch reads NAPYQPTVD. Residues 151-208 are domain III; it reads DAGVEQVVEGLVSLGWRQQDAQRAVNEACAENDVPMPLASDDAPRVLRLALARMDRGR.

It belongs to the RuvA family. As to quaternary structure, homotetramer. Forms an RuvA(8)-RuvB(12)-Holliday junction (HJ) complex. HJ DNA is sandwiched between 2 RuvA tetramers; dsDNA enters through RuvA and exits via RuvB. An RuvB hexamer assembles on each DNA strand where it exits the tetramer. Each RuvB hexamer is contacted by two RuvA subunits (via domain III) on 2 adjacent RuvB subunits; this complex drives branch migration. In the full resolvosome a probable DNA-RuvA(4)-RuvB(12)-RuvC(2) complex forms which resolves the HJ.

It localises to the cytoplasm. In terms of biological role, the RuvA-RuvB-RuvC complex processes Holliday junction (HJ) DNA during genetic recombination and DNA repair, while the RuvA-RuvB complex plays an important role in the rescue of blocked DNA replication forks via replication fork reversal (RFR). RuvA specifically binds to HJ cruciform DNA, conferring on it an open structure. The RuvB hexamer acts as an ATP-dependent pump, pulling dsDNA into and through the RuvAB complex. HJ branch migration allows RuvC to scan DNA until it finds its consensus sequence, where it cleaves and resolves the cruciform DNA. In Bifidobacterium longum subsp. infantis (strain ATCC 15697 / DSM 20088 / JCM 1222 / NCTC 11817 / S12), this protein is Holliday junction branch migration complex subunit RuvA.